A 492-amino-acid polypeptide reads, in one-letter code: Probable G-protein coupled receptor Mth-like 8 (492 aa).

Positions M1 to G21 are cleaved as a signal peptide. Residues F22 to Y218 are Extracellular-facing. Intrachain disulfides connect C30–C82, C84–C89, C93–C184, and C94–C107. Residues N37 and N51 are each glycosylated (N-linked (GlcNAc...) asparagine). N-linked (GlcNAc...) asparagine glycans are attached at residues N129, N169, and N192. A helical membrane pass occupies residues A219–C239. Residues S240–S245 lie on the Cytoplasmic side of the membrane. The chain crosses the membrane as a helical span at residues F246–A266. Topologically, residues Y267–R282 are extracellular. N275 carries N-linked (GlcNAc...) asparagine glycosylation. The helical transmembrane segment at I283 to A303 threads the bilayer. At F304–K317 the chain is on the cytoplasmic side. A helical transmembrane segment spans residues L318 to V338. Residues G339–S362 are Extracellular-facing. The N-linked (GlcNAc...) asparagine glycan is linked to N360. Residues V363–V383 form a helical membrane-spanning segment. Over L384–S411 the chain is Cytoplasmic. A helical membrane pass occupies residues F412 to F432. At N433–H441 the chain is on the extracellular side. N-linked (GlcNAc...) asparagine glycosylation is present at N438. The helical transmembrane segment at L442–I462 threads the bilayer. Over G463–G492 the chain is Cytoplasmic.

The protein belongs to the G-protein coupled receptor 2 family. Mth subfamily.

It is found in the cell membrane. The sequence is that of Probable G-protein coupled receptor Mth-like 8 (mthl8) from Drosophila melanogaster (Fruit fly).